A 244-amino-acid chain; its full sequence is Probable transcriptional regulatory protein CHY_1525 (244 aa).

The protein belongs to the TACO1 family.

The protein localises to the cytoplasm. The sequence is that of Probable transcriptional regulatory protein CHY_1525 from Carboxydothermus hydrogenoformans (strain ATCC BAA-161 / DSM 6008 / Z-2901).